Reading from the N-terminus, the 831-residue chain is MutS protein homolog 5 (831 aa).

A disordered region spans residues 1 to 43; sequence MAFRATPGRTPPGPGPGVPSASFSSPQPAMAAPGGIEEEDEEE. 589-596 provides a ligand contact to ATP; that stretch reads GPNSSGKS.

The protein belongs to the DNA mismatch repair MutS family. Heterooligomer of MSH4 and MSH5. Interacts with HJURP. Interacts with C7h12orf40/REDIC1.

In terms of biological role, involved in DNA mismatch repair and meiotic recombination processes. Facilitates crossovers between homologs during meiosis. The protein is MutS protein homolog 5 (Msh5) of Rattus norvegicus (Rat).